A 729-amino-acid chain; its full sequence is Denticleless protein homolog (729 aa).

An N-acetylmethionine modification is found at Met1. 3 WD repeats span residues 47–89, 96–135, and 138–178; these read GVPV…SKKT, AHWN…LMGT, and GHQC…KDGF. A DDB1-binding motif motif is present at residues 168–171; sequence WDTR. Polar residues predominate over residues 189–198; sequence HNTADKQTPS. Residues 189 to 212 form a disordered region; it reads HNTADKQTPSKPKKKQNSKGLAPA. Thr196 carries the post-translational modification Phosphothreonine. The Nuclear localization signal signature appears at 197-203; it reads PSKPKKK. WD repeat units follow at residues 214–253, 269–308, 313–354, and 358–398; these read DSQQ…TAYR, TRKL…TSPV, GHQN…HPPT, and GHSQ…EEKP. The DDB1-binding motif signature appears at 243-246; the sequence is WDLR. Ser409 and Ser425 each carry phosphoserine. Disordered regions lie at residues 416-445 and 460-491; these read KACP…SSPS and PSST…VSPK. Positions 427-445 are enriched in low complexity; it reads STPAKAPRAKSSPSISSPS. The span at 460–475 shows a compositional bias: polar residues; it reads PSSTPTFSVKTTPATT. Residue Thr463 is modified to Phosphothreonine; by CDK1 and CDK2. A compositionally biased stretch (low complexity) spans 476 to 491; sequence RSSVSRRGSISSVSPK. Phosphoserine occurs at positions 484, 489, 494, and 511. Residues 504-546 are disordered; it reads VTRTPSSSPPVTPPASETKISSPRKALIPVSQKSSQADACSES. Residue Thr515 is modified to Phosphothreonine. Ser556 carries the post-translational modification Phosphoserine. A compositionally biased stretch (polar residues) spans 596–607; the sequence is VLSQDSEGPTKS. Positions 596-705 are disordered; that stretch reads VLSQDSEGPT…GPVTITPSSM (110 aa). Low complexity-rich tracts occupy residues 630 to 645 and 674 to 688; these read EGCG…CGEG and SSPR…SSRR. Ser675 and Ser678 each carry phosphoserine. 2 positions are modified to phosphothreonine: Thr683 and Thr701.

The protein belongs to the WD repeat cdt2 family. Component of the DCX(DTL) E3 ubiquitin ligase complex (also called CRL4(CDT2)), at least composed of CUL4 (CUL4A or CUL4B), DDB1, DTL/CDT2 and RBX1. Interacts with CDKN1A and DDB1. Interacts with FBXO11; SCF(FBXWO11) controls DTL stability but DCX(DTL) does not control FBXO11 stability. Interacts with CRY1. Ubiquitinated by the anaphase promoting complex/cyclosome (APC/C). Autoubiquitinated through 'Lys-48'-polyubiquitin chains in a PCNA-independent reaction, allowing proteasomal turnover. Polyubiquitinated by SCF(FBXO11) when not phosphorylated, leading to its degradation. A tight regulation of the polyubiquitination by SCF(FBXO11) is involved in the control of different processes such as TGF-beta signaling, cell cycle progression and exit. Post-translationally, phosphorylated at Thr-463 by CDK1/Cyclin B and CDK2/Cycnlin A but not by CDK2/Cyclin E, MAPK1 or PLK1. Phosphorylation at Thr-463 inhibits the interaction with FBXO11 and decreases upon cell cycle exit induced by TGF-beta or serum starvation.

It is found in the nucleus. The protein resides in the nucleus membrane. Its subcellular location is the cytoplasm. The protein localises to the cytoskeleton. It localises to the microtubule organizing center. It is found in the centrosome. The protein resides in the chromosome. It functions in the pathway protein modification; protein ubiquitination. Substrate-specific adapter of a DCX (DDB1-CUL4-X-box) E3 ubiquitin-protein ligase complex required for cell cycle control, DNA damage response and translesion DNA synthesis. The DCX(DTL) complex, also named CRL4(CDT2) complex, mediates the polyubiquitination and subsequent degradation of CDT1, CDKN1A/p21(CIP1), FBH1, KMT5A and SDE2. CDT1 degradation in response to DNA damage is necessary to ensure proper cell cycle regulation of DNA replication. CDKN1A/p21(CIP1) degradation during S phase or following UV irradiation is essential to control replication licensing. KMT5A degradation is also important for a proper regulation of mechanisms such as TGF-beta signaling, cell cycle progression, DNA repair and cell migration. Most substrates require their interaction with PCNA for their polyubiquitination: substrates interact with PCNA via their PIP-box, and those containing the 'K+4' motif in the PIP box, recruit the DCX(DTL) complex, leading to their degradation. In undamaged proliferating cells, the DCX(DTL) complex also promotes the 'Lys-164' monoubiquitination of PCNA, thereby being involved in PCNA-dependent translesion DNA synthesis. The DDB1-CUL4A-DTL E3 ligase complex regulates the circadian clock function by mediating the ubiquitination and degradation of CRY1. The polypeptide is Denticleless protein homolog (Dtl) (Mus musculus (Mouse)).